Here is a 404-residue protein sequence, read N- to C-terminus: Glucose-1-phosphate adenylyltransferase (404 aa).

Alpha-D-glucose 1-phosphate is bound by residues Y99, G164, 179–180 (EK), and S197.

Belongs to the bacterial/plant glucose-1-phosphate adenylyltransferase family.

It carries out the reaction alpha-D-glucose 1-phosphate + ATP + H(+) = ADP-alpha-D-glucose + diphosphate. It functions in the pathway capsule biogenesis; capsule polysaccharide biosynthesis. Its pathway is glycan biosynthesis; glycogen biosynthesis. In terms of biological role, involved in the biosynthesis of ADP-glucose, a building block, required in the biosynthesis of maltose-1-phosphate (M1P) and in the elongation reactions to produce linear alpha-1,4-glucans. Catalyzes the reaction between ATP and alpha-D-glucose 1-phosphate (G1P) to produce pyrophosphate and ADP-Glc. The protein is Glucose-1-phosphate adenylyltransferase of Mycolicibacterium paratuberculosis (strain ATCC BAA-968 / K-10) (Mycobacterium paratuberculosis).